A 167-amino-acid chain; its full sequence is Ribosome maturation factor RimP (167 aa).

This sequence belongs to the RimP family.

Its subcellular location is the cytoplasm. Required for maturation of 30S ribosomal subunits. This chain is Ribosome maturation factor RimP, found in Streptomyces griseus subsp. griseus (strain JCM 4626 / CBS 651.72 / NBRC 13350 / KCC S-0626 / ISP 5235).